The sequence spans 164 residues: Phosphopantetheine adenylyltransferase (164 aa).

S10 lines the substrate pocket. ATP-binding positions include 10 to 11 (SF) and H18. Residues K42, T79, and R93 each coordinate substrate. ATP contacts are provided by residues 94–96 (GLR), E104, and 129–135 (VRPITAS).

Belongs to the bacterial CoaD family. In terms of assembly, homohexamer. Mg(2+) is required as a cofactor.

The protein localises to the cytoplasm. The enzyme catalyses (R)-4'-phosphopantetheine + ATP + H(+) = 3'-dephospho-CoA + diphosphate. It functions in the pathway cofactor biosynthesis; coenzyme A biosynthesis; CoA from (R)-pantothenate: step 4/5. In terms of biological role, reversibly transfers an adenylyl group from ATP to 4'-phosphopantetheine, yielding dephospho-CoA (dPCoA) and pyrophosphate. The protein is Phosphopantetheine adenylyltransferase of Bradyrhizobium sp. (strain ORS 278).